The primary structure comprises 135 residues: ATP synthase epsilon chain (135 aa).

This sequence belongs to the ATPase epsilon chain family. As to quaternary structure, F-type ATPases have 2 components, CF(1) - the catalytic core - and CF(0) - the membrane proton channel. CF(1) has five subunits: alpha(3), beta(3), gamma(1), delta(1), epsilon(1). CF(0) has three main subunits: a, b and c.

The protein resides in the cellular thylakoid membrane. Produces ATP from ADP in the presence of a proton gradient across the membrane. The protein is ATP synthase epsilon chain of Prochlorococcus marinus (strain NATL1A).